A 510-amino-acid chain; its full sequence is NAD(P)H-quinone oxidoreductase subunit 2 B, chloroplastic (510 aa).

Transmembrane regions (helical) follow at residues 24–44, 57–77, 99–119, 124–144, 149–169, 183–203, 227–247, 295–315, 323–343, 354–374, 395–415, 418–438, and 484–504; these read LLLF…GLIL, IPWL…SLLF, IFQF…VEYI, MAIT…MFLC, LITI…LSGY, YLLM…WLYG, PGIS…LSPA, WHLL…LIAI, MLAY…IVGD, YMLF…LFGL, ALSL…AGFF, LYLF…IGLL, and MIVC…IIAI.

The protein belongs to the complex I subunit 2 family. In terms of assembly, NDH is composed of at least 16 different subunits, 5 of which are encoded in the nucleus.

It is found in the plastid. The protein resides in the chloroplast thylakoid membrane. The catalysed reaction is a plastoquinone + NADH + (n+1) H(+)(in) = a plastoquinol + NAD(+) + n H(+)(out). The enzyme catalyses a plastoquinone + NADPH + (n+1) H(+)(in) = a plastoquinol + NADP(+) + n H(+)(out). Functionally, NDH shuttles electrons from NAD(P)H:plastoquinone, via FMN and iron-sulfur (Fe-S) centers, to quinones in the photosynthetic chain and possibly in a chloroplast respiratory chain. The immediate electron acceptor for the enzyme in this species is believed to be plastoquinone. Couples the redox reaction to proton translocation, and thus conserves the redox energy in a proton gradient. The protein is NAD(P)H-quinone oxidoreductase subunit 2 B, chloroplastic of Lactuca sativa (Garden lettuce).